The following is a 287-amino-acid chain: D-apionate oxidoisomerase (287 aa).

Residues 13–15 (GKM), E36, and D71 each bind NAD(+). Zn(2+)-binding residues include H116 and E186.

Belongs to the ApnO family. Zn(2+) serves as cofactor.

It carries out the reaction D-apionate + NAD(+) = 3-oxoisoapionate + NADH + H(+). It participates in carbohydrate metabolism. In terms of biological role, involved in catabolism of D-apiose. Catalyzes the conversion of D-apionate to 3-oxo-isoapionate. The chain is D-apionate oxidoisomerase from Blautia hydrogenotrophica (strain DSM 10507 / JCM 14656 / S5a33) (Ruminococcus hydrogenotrophicus).